The primary structure comprises 137 residues: Small ribosomal subunit protein uS12 (137 aa).

2 disordered regions span residues 1–21 (MPTI…KSDS) and 33–57 (KVQT…TPKK).

This sequence belongs to the universal ribosomal protein uS12 family. Part of the 30S ribosomal subunit. Contacts proteins S8 and S17. May interact with IF1 in the 30S initiation complex.

With S4 and S5 plays an important role in translational accuracy. Functionally, interacts with and stabilizes bases of the 16S rRNA that are involved in tRNA selection in the A site and with the mRNA backbone. Located at the interface of the 30S and 50S subunits, it traverses the body of the 30S subunit contacting proteins on the other side and probably holding the rRNA structure together. The combined cluster of proteins S8, S12 and S17 appears to hold together the shoulder and platform of the 30S subunit. The polypeptide is Small ribosomal subunit protein uS12 (Streptococcus pyogenes serotype M1).